A 406-amino-acid chain; its full sequence is 4-hydroxy-3-methylbut-2-en-1-yl diphosphate synthase (ferredoxin) (406 aa).

Residues cysteine 315, cysteine 318, cysteine 349, and glutamate 356 each contribute to the [4Fe-4S] cluster site.

This sequence belongs to the IspG family. It depends on [4Fe-4S] cluster as a cofactor.

It catalyses the reaction (2E)-4-hydroxy-3-methylbut-2-enyl diphosphate + 2 oxidized [2Fe-2S]-[ferredoxin] + H2O = 2-C-methyl-D-erythritol 2,4-cyclic diphosphate + 2 reduced [2Fe-2S]-[ferredoxin] + H(+). It functions in the pathway isoprenoid biosynthesis; isopentenyl diphosphate biosynthesis via DXP pathway; isopentenyl diphosphate from 1-deoxy-D-xylulose 5-phosphate: step 5/6. Its function is as follows. Converts 2C-methyl-D-erythritol 2,4-cyclodiphosphate (ME-2,4cPP) into 1-hydroxy-2-methyl-2-(E)-butenyl 4-diphosphate. The protein is 4-hydroxy-3-methylbut-2-en-1-yl diphosphate synthase (ferredoxin) of Rippkaea orientalis (strain PCC 8801 / RF-1) (Cyanothece sp. (strain PCC 8801)).